The primary structure comprises 108 residues: uncharacterized protein (108 aa).

This sequence belongs to the UPF0440 family.

This is an uncharacterized protein from Thermococcus kodakarensis (strain ATCC BAA-918 / JCM 12380 / KOD1) (Pyrococcus kodakaraensis (strain KOD1)).